A 341-amino-acid chain; its full sequence is Phosphoribosylformylglycinamidine cyclo-ligase (341 aa).

It belongs to the AIR synthase family.

The protein resides in the cytoplasm. It catalyses the reaction 2-formamido-N(1)-(5-O-phospho-beta-D-ribosyl)acetamidine + ATP = 5-amino-1-(5-phospho-beta-D-ribosyl)imidazole + ADP + phosphate + H(+). It functions in the pathway purine metabolism; IMP biosynthesis via de novo pathway; 5-amino-1-(5-phospho-D-ribosyl)imidazole from N(2)-formyl-N(1)-(5-phospho-D-ribosyl)glycinamide: step 2/2. The polypeptide is Phosphoribosylformylglycinamidine cyclo-ligase (Thermosynechococcus vestitus (strain NIES-2133 / IAM M-273 / BP-1)).